A 114-amino-acid chain; its full sequence is Large ribosomal subunit protein bL20 (114 aa).

Belongs to the bacterial ribosomal protein bL20 family.

Functionally, binds directly to 23S ribosomal RNA and is necessary for the in vitro assembly process of the 50S ribosomal subunit. It is not involved in the protein synthesizing functions of that subunit. The sequence is that of Large ribosomal subunit protein bL20 from Flavobacterium psychrophilum (strain ATCC 49511 / DSM 21280 / CIP 103535 / JIP02/86).